A 360-amino-acid polypeptide reads, in one-letter code: MSLNRLHIEAFRNITSAQLQPGDGLNVIYGQNGSGKTSILEAIYFLGMGRSFRSHLSQRVINNDADALTLFANMQSAEDESKIGLRRFRSGEIEVKINGDKVKRLSTLAETLPIQVITPESFSLLFEGPKSRRQFIDWGAFHSDPRFYAAWVNVRRILKQRNQLLRDESPYSSIQFWDKEFIRYAELVTEIRKQYVDSLNELLKGIIEEFLPQVDVKVSFTRGWDSKTEYAQLLETQYPRDLATGFTVSGPHKADLRLRVGTLPAQDALSRGQLKLLVCALRIAQGKLLKQQIDKKSIYLVDDLPSELDAQHRKLLLQQLADTGAQVFVTAIEPAAIVDSLITPPSKMFHVEHGRVTVIE.

ATP is bound at residue 30-37 (GQNGSGKT).

It belongs to the RecF family.

It localises to the cytoplasm. In terms of biological role, the RecF protein is involved in DNA metabolism; it is required for DNA replication and normal SOS inducibility. RecF binds preferentially to single-stranded, linear DNA. It also seems to bind ATP. The sequence is that of DNA replication and repair protein RecF from Shewanella piezotolerans (strain WP3 / JCM 13877).